A 134-amino-acid chain; its full sequence is Small ribosomal subunit protein uS8 (134 aa).

Belongs to the universal ribosomal protein uS8 family. As to quaternary structure, part of the 30S ribosomal subunit. Contacts proteins S5 and S12.

Its function is as follows. One of the primary rRNA binding proteins, it binds directly to 16S rRNA central domain where it helps coordinate assembly of the platform of the 30S subunit. The chain is Small ribosomal subunit protein uS8 from Petrotoga mobilis (strain DSM 10674 / SJ95).